A 153-amino-acid polypeptide reads, in one-letter code: Ribosomal RNA large subunit methyltransferase H (153 aa).

2 residues coordinate S-adenosyl-L-methionine: leucine 71 and glycine 102.

This sequence belongs to the RNA methyltransferase RlmH family. As to quaternary structure, homodimer.

The protein resides in the cytoplasm. The enzyme catalyses pseudouridine(1915) in 23S rRNA + S-adenosyl-L-methionine = N(3)-methylpseudouridine(1915) in 23S rRNA + S-adenosyl-L-homocysteine + H(+). Functionally, specifically methylates the pseudouridine at position 1915 (m3Psi1915) in 23S rRNA. The chain is Ribosomal RNA large subunit methyltransferase H from Anaeromyxobacter sp. (strain K).